We begin with the raw amino-acid sequence, 72 residues long: LITAF domain-containing protein (72 aa).

The region spanning 1 to 71 is the LITAF domain; that stretch reads MPVQAVCPYC…CQRELFYYHR (71 aa). Zn(2+) is bound by residues Cys-7 and Cys-10. The tract at residues 22–45 is membrane-binding amphipathic helix; sequence PGALTWLLCTTLFLFGYVLGCCFL. Positions 59 and 62 each coordinate Zn(2+).

The protein belongs to the CDIP1/LITAF family.

The protein resides in the membrane. The polypeptide is LITAF domain-containing protein (Homo sapiens (Human)).